A 7913-amino-acid polypeptide reads, in one-letter code: Nonribosomal peptide synthetase dtxS1 (7913 aa).

Residues 263-662 are adenylation 1; that stretch reads FEQRSRAHPN…GRNDNQVKIR (400 aa). One can recognise a Carrier 1 domain in the interval 789–865; the sequence is QPLSEVEKQV…NVAGQARRTT (77 aa). Position 826 is an O-(pantetheine 4'-phosphoryl)serine (Ser826). The condensation 1 stretch occupies residues 903–1171; that stretch reads QDAFPCTSLQ…ITTVPVRIRL (269 aa). The segment at 1332–1740 is adenylation 2; the sequence is LETQAHSRPD…GRKDAQVKIR (409 aa). Positions 1865 to 1941 constitute a Carrier 2 domain; that stretch reads QPRTKLERQL…NLAQATGTQG (77 aa). Ser1902 is modified (O-(pantetheine 4'-phosphoryl)serine). Residues 1965–2249 are condensation 2; that stretch reads PAQLSPIQRL…FSTIFPVRVS (285 aa). Positions 2863–3255 are adenylation 3; sequence LAQPHEPAIC…ARKDAQIKIR (393 aa). Positions 3380-3456 constitute a Carrier 3 domain; sequence QPLSEAERKM…NVTHQAVAQL (77 aa). At Ser3417 the chain carries O-(pantetheine 4'-phosphoryl)serine. The condensation 3 stretch occupies residues 3496 to 3761; that stretch reads DAFPCTPLQE…FATLPLRVRL (266 aa). The adenylation 4 stretch occupies residues 3924–4321; sequence DRVRIHPNAP…GRKDDQVKLR (398 aa). The span at 4439–4450 shows a compositional bias: polar residues; the sequence is ELAQARTAQQGP. A disordered region spans residues 4439–4459; that stretch reads ELAQARTAQQGPKRQPASEAE. The Carrier 4 domain occupies 4453-4529; that stretch reads QPASEAERQM…EAATQAQMLG (77 aa). Residue Ser4490 is modified to O-(pantetheine 4'-phosphoryl)serine. The condensation 4 stretch occupies residues 4545-4837; that stretch reads QSFAQARLWF…VNMQCLRVKI (293 aa). An adenylation 5 region spans residues 5006–5405; the sequence is FRQQVAACAD…RRMDAQVKIR (400 aa). The region spanning 5933-6009 is the Carrier 5 domain; the sequence is QPTSKTQRQL…DMAEGLPLAK (77 aa). Ser5970 carries the post-translational modification O-(pantetheine 4'-phosphoryl)serine. The tract at residues 6023 to 6315 is condensation 5; sequence VEQSFAQRRL…VNMQCIRIRV (293 aa). Residues 6481 to 6766 are adenylation 6; it reads FRQQALLNPD…IINAYGPTEN (286 aa). The Carrier 6 domain maps to 7394–7470; sequence QPTTDMEREM…DLACHLSPEE (77 aa). Ser7431 carries the O-(pantetheine 4'-phosphoryl)serine modification. The tract at residues 7501-7771 is condensation 6; sequence EDVLPLTSFQ…CLNIVPIRVN (271 aa).

Belongs to the NRP synthetase family.

The protein operates within secondary metabolite biosynthesis. Its function is as follows. Nonribosomal peptide synthetase; part of the gene cluster that mediates the biosynthesis of destruxins, insecticidal cyclic hexadepsipeptides which induce flaccid paralysis and visceral muscle contraction in insects through targeting the calcium channels and vacuolar-type ATPases. The aldo-keto reductase dtxS3 converts alpha-ketoisocaproic acid from deaminated leucine into alpha-hydroxyisocaproic acid (HIC), which is the first substrate for destruxin assembly by dtxS1. L-aspartate decarboxylase dtxS4 converts aspartic acid into beta-alanine, the last substrate for the destruxin assembly line performed by dtxS1. The nonribosomal peptide synthetase dtxS1 synthesizes destruxins B and B2, whereas the cytochrome P450 monooxygenase dtxS2 is required to convert destruxin B into other destruxin derivatives, including destructins C, D, A and E. Destruxin E-diol (ED) is further produced in a non-enzymatic manner from destruxin E. Destruxins play an important role in virulence and escape from insect host immune defenses. The protein is Nonribosomal peptide synthetase dtxS1 of Metarhizium robertsii (strain ARSEF 23 / ATCC MYA-3075) (Metarhizium anisopliae (strain ARSEF 23)).